A 103-amino-acid polypeptide reads, in one-letter code: Large ribosomal subunit protein bL21 (103 aa).

The protein belongs to the bacterial ribosomal protein bL21 family. In terms of assembly, part of the 50S ribosomal subunit. Contacts protein L20.

Functionally, this protein binds to 23S rRNA in the presence of protein L20. In Mycobacterium leprae (strain Br4923), this protein is Large ribosomal subunit protein bL21.